The primary structure comprises 308 residues: Taste receptor type 2 member 41 (308 aa).

Residues 1 to 6 (MLSTVS) lie on the Extracellular side of the membrane. A helical membrane pass occupies residues 7 to 27 (VFFMSIFVLLCFLGILANGFI). The Cytoplasmic portion of the chain corresponds to 28 to 60 (VLMLSREWLWRGRLLPSDMILLSLGTSRFCQQC). Residues 61–81 (VGLVNSFYYSLHLVEYSRSLA) traverse the membrane as a helical segment. Residues 82 to 90 (RQLISLHMD) lie on the Extracellular side of the membrane. Residues 91–111 (FLNSATFWFGTWLSVLFCIKI) traverse the membrane as a helical segment. The Cytoplasmic portion of the chain corresponds to 112–128 (ANFSHPAFLWLKWRFPA). The helical transmembrane segment at 129-149 (LVPWLLLGSILVSFIVTLMFF) threads the bilayer. The Extracellular segment spans residues 150–184 (WGNHTVYQAFLRRKFSGNTTFKEWNRRLEIDYFMP). N-linked (GlcNAc...) asparagine glycans are attached at residues asparagine 152 and asparagine 167. A helical transmembrane segment spans residues 185-205 (LKLVTTSIPCSLFLVSILLLI). The Cytoplasmic portion of the chain corresponds to 206–239 (NSLRRHSQRMQHNAHSLQDPNTQAHSRALKSLIS). The chain crosses the membrane as a helical span at residues 240 to 260 (FLVLYALSYVSMVIDATVVIS). At 261 to 264 (SDNV) the chain is on the extracellular side. A helical membrane pass occupies residues 265–285 (WYWPWQIILYLCMSVHPFILI). The Cytoplasmic portion of the chain corresponds to 286-308 (TNNLKFRGTFRQLLLLARGFWVT).

This sequence belongs to the G-protein coupled receptor T2R family. As to expression, expressed in subsets of taste receptor cells of the tongue and palate epithelium and exclusively in gustducin-positive cells. Expressed in 15% taste bud cells in circumvallate and foliate papillae but only in 2% in fungiform papillae. Expressed in the duodenum, antrum and fundus (part of the stomach).

It localises to the membrane. Its function is as follows. Receptor that may play a role in the perception of bitterness and is gustducin-linked. May play a role in sensing the chemical composition of the gastrointestinal content. The activity of this receptor may stimulate alpha gustducin, mediate PLC-beta-2 activation and lead to the gating of TRPM5. This Rattus norvegicus (Rat) protein is Taste receptor type 2 member 41 (Tas2r41).